The chain runs to 202 residues: NADH:(hydroxy)cinnamate reductase subunit CrdA (202 aa).

Belongs to the NADH-dependent flavin reductase family. As to quaternary structure, NADH:(hydroxy)cinnamate reductase Crd is a heterodimer composed of CrdA and CrdB subunits, encoded by adjacent genes. FMN serves as cofactor.

Its function is as follows. Component of the NADH:(hydroxy)cinnamate reductase. CrdA is probably reduced by NADH and then transfers the electrons to the catalytic center of CrdB. Is likely involved in protecting V.ruber from (hydroxy)cinnamate poisoning. The chain is NADH:(hydroxy)cinnamate reductase subunit CrdA from Vibrio ruber (strain DSM 16370 / JCM 11486 / BCRC 17186 / CECT 7878 / LMG 23124 / VR1).